An 802-amino-acid polypeptide reads, in one-letter code: Post-transcriptional regulator mkt1 (802 aa).

Residues serine 227, serine 228, and serine 230 each carry the phosphoserine modification.

Belongs to the XPG/RAD2 endonuclease family. As to quaternary structure, interacts with pab1 binding protein ath1.

Its function is as follows. Involved in post-transcriptional regulation of gene expression by 3'-UTR-mediated RNA regulation. Promotes interactions between mRNA and poly(A)-binding protein. Binds the 3' UTR of mRNAs, centromeric transcripts and antisense-rDNA. Required for the establishment but not the maintenance of heterochromatin at pericentromeres, and for the maintenance of small domains of facultative heterochromatin known as HOODs. The protein is Post-transcriptional regulator mkt1 of Schizosaccharomyces pombe (strain 972 / ATCC 24843) (Fission yeast).